We begin with the raw amino-acid sequence, 345 residues long: Putative mediator of RNA polymerase II transcription subunit 7 (345 aa).

2 stretches are compositionally biased toward low complexity: residues 1–27 and 88–126; these read MNTS…TPQQ and NNNN…NNNN. Disordered regions lie at residues 1 to 130 and 292 to 315; these read MNTS…KATT and TPLP…NNSQ.

Belongs to the Mediator complex subunit 7 family. As to quaternary structure, component of the Mediator complex.

Its subcellular location is the nucleus. Functionally, component of the Mediator complex, a coactivator involved in the regulated transcription of nearly all RNA polymerase II-dependent genes. Mediator functions as a bridge to convey information from gene-specific regulatory proteins to the basal RNA polymerase II transcription machinery. Mediator is recruited to promoters by direct interactions with regulatory proteins and serves as a scaffold for the assembly of a functional preinitiation complex with RNA polymerase II and the general transcription factors. The chain is Putative mediator of RNA polymerase II transcription subunit 7 (med7) from Dictyostelium discoideum (Social amoeba).